A 301-amino-acid polypeptide reads, in one-letter code: Phosducin-like protein (301 aa).

Position 2 is an N-acetylthreonine (threonine 2). The segment at 15 to 53 (YYYSSSEEEDSDHEDKDRGRGALAGSSMPADADLAGEGI) is disordered. Serine 20, serine 25, serine 226, serine 293, and serine 296 each carry phosphoserine. Residues 37 to 299 (LAGSSMPADA…TCHSEDSDLE (263 aa)) enclose the Phosducin domain. The interval 158 to 301 (FKQVFEIPSG…HSEDSDLEID (144 aa)) is thioredoxin fold.

This sequence belongs to the phosducin family. In terms of assembly, forms a complex with the beta and gamma subunits of the GTP-binding protein, transducin. Interacts with the CCT chaperonin complex.

It localises to the cell projection. It is found in the cilium. In terms of biological role, functions as a co-chaperone for CCT in the assembly of heterotrimeric G protein complexes, facilitates the assembly of both Gbeta-Ggamma and RGS-Gbeta5 heterodimers. Also acts as a positive regulator of hedgehog signaling and regulates ciliary function. This Bos taurus (Bovine) protein is Phosducin-like protein (PDCL).